Consider the following 266-residue polypeptide: bZIP transcription factor 12 (266 aa).

Positions 184–248 (AMQRQKRMIK…KELKEMVVPV (65 aa)) constitute a bZIP domain. The basic motif stretch occupies residues 187 to 205 (RQKRMIKNRESAARSRERK). Residues 202–244 (RERKQAYIAELESLVTQLEEENAKMFKEQEEQHQKRLKELKEM) are a coiled coil. Residues 212-219 (LESLVTQL) form a leucine-zipper region.

Its subcellular location is the nucleus. In terms of biological role, transcription activator that binds to the ABA-responsive elements (ABREs) in vitro. Involved in abiotic stress responses and abscisic acid (ABA) signaling. Involved in the signaling pathway that induces growth inhibition in response to D-allose. The protein is bZIP transcription factor 12 of Oryza sativa subsp. japonica (Rice).